A 966-amino-acid polypeptide reads, in one-letter code: Phosphoenolpyruvate carboxylase (966 aa).

Serine 10 is subject to Phosphoserine. Active-site residues include histidine 171 and lysine 601.

The protein belongs to the PEPCase type 1 family. Homotetramer. It depends on Mg(2+) as a cofactor.

The protein localises to the cytoplasm. The enzyme catalyses oxaloacetate + phosphate = phosphoenolpyruvate + hydrogencarbonate. By light-reversible phosphorylation. Through the carboxylation of phosphoenolpyruvate (PEP) it forms oxaloacetate, a four-carbon dicarboxylic acid source for the tricarboxylic acid cycle. The polypeptide is Phosphoenolpyruvate carboxylase (PEPC) (Medicago sativa (Alfalfa)).